A 49-amino-acid chain; its full sequence is MRVNVTLACTECKRRNYITTKNKKNDPNRIEMKKYCRWCGSHTMHKETK.

It belongs to the bacterial ribosomal protein bL33 family.

The protein is Large ribosomal subunit protein bL33 of Desulforudis audaxviator (strain MP104C).